We begin with the raw amino-acid sequence, 271 residues long: Solute carrier family 66 member 2 (271 aa).

3 helical membrane passes run 8-28 (WLLV…MVFG), 49-69 (FSTY…LFWF), and 76-96 (PLLW…KLCT). The region spanning 14–80 (HQLVSWGAAA…RRFESPLLWQ (67 aa)) is the PQ-loop 1 domain. S110 is subject to Phosphoserine. 3 helical membrane passes run 145–165 (DYVQ…YLSI), 168–188 (ALFV…LGVP), and 232–252 (VCGL…YAFA). Residues 178–233 (AVLTEAMLGVPQLYRNHRHQSTEGMSIKMVLMWTSGDAFKTAYFLLKGAPLQFSVC) form the PQ-loop 2 domain.

Its subcellular location is the membrane. This Homo sapiens (Human) protein is Solute carrier family 66 member 2.